A 349-amino-acid polypeptide reads, in one-letter code: Phosphoribosylformylglycinamidine cyclo-ligase (349 aa).

It belongs to the AIR synthase family.

The protein localises to the cytoplasm. The catalysed reaction is 2-formamido-N(1)-(5-O-phospho-beta-D-ribosyl)acetamidine + ATP = 5-amino-1-(5-phospho-beta-D-ribosyl)imidazole + ADP + phosphate + H(+). The protein operates within purine metabolism; IMP biosynthesis via de novo pathway; 5-amino-1-(5-phospho-D-ribosyl)imidazole from N(2)-formyl-N(1)-(5-phospho-D-ribosyl)glycinamide: step 2/2. In Albidiferax ferrireducens (strain ATCC BAA-621 / DSM 15236 / T118) (Rhodoferax ferrireducens), this protein is Phosphoribosylformylglycinamidine cyclo-ligase.